A 243-amino-acid polypeptide reads, in one-letter code: Glutathione S-transferase U14 (243 aa).

In terms of domain architecture, GST N-terminal spans 5-87 (DTVKLIGCSD…YLDEAWPSDP (83 aa)). Residues 15–16 (DP), 44–45 (EK), 58–59 (KT), and 71–72 (ES) contribute to the glutathione site. In terms of domain architecture, GST C-terminal spans 93-220 (NAYDRASARF…MPTVEEVTEL (128 aa)). Threonine 159 carries the phosphothreonine modification.

It belongs to the GST superfamily. Tau family.

It is found in the cytoplasm. It localises to the cytosol. The enzyme catalyses RX + glutathione = an S-substituted glutathione + a halide anion + H(+). Functionally, may be involved in the conjugation of reduced glutathione to a wide number of exogenous and endogenous hydrophobic electrophiles and have a detoxification role against certain herbicides. This chain is Glutathione S-transferase U14 (GSTU14), found in Arabidopsis thaliana (Mouse-ear cress).